The following is a 271-amino-acid chain: Beta-lactamase (271 aa).

The active-site Acyl-ester intermediate is serine 46. 210–212 (KTG) provides a ligand contact to substrate.

This sequence belongs to the class-A beta-lactamase family. As to quaternary structure, monomer.

It carries out the reaction a beta-lactam + H2O = a substituted beta-amino acid. Its function is as follows. Hydrolyzes broad-spectrum beta-lactam antibiotics. Active against cephalosporins. The sequence is that of Beta-lactamase from Proteus vulgaris.